Consider the following 98-residue polypeptide: UPF0473 protein lp_2273 (98 aa).

This sequence belongs to the UPF0473 family.

In Lactiplantibacillus plantarum (strain ATCC BAA-793 / NCIMB 8826 / WCFS1) (Lactobacillus plantarum), this protein is UPF0473 protein lp_2273.